The sequence spans 348 residues: Protein arginine N-methyltransferase 1 (348 aa).

Residues 20 to 322 (EQHYFNSYDH…EKNNRDLNIK (303 aa)) form the SAM-dependent MTase PRMT-type domain. Positions 33, 42, 66, 88, and 117 each coordinate S-adenosyl-L-methionine. Residues Glu-132 and Glu-141 contribute to the active site.

The protein belongs to the class I-like SAM-binding methyltransferase superfamily. Protein arginine N-methyltransferase family. As to quaternary structure, homodimer. The dimers can then associate to form a ring-shaped homohexamer. Interacts with NPL3, BRE5, MTR4, SNF2, SUM1, and SSD1.

Its subcellular location is the nucleus. It catalyses the reaction L-arginyl-[protein] + S-adenosyl-L-methionine = N(omega)-methyl-L-arginyl-[protein] + S-adenosyl-L-homocysteine + H(+). It carries out the reaction L-arginyl-[protein] + 2 S-adenosyl-L-methionine = N(omega),N(omega)-dimethyl-L-arginyl-[protein] + 2 S-adenosyl-L-homocysteine + 2 H(+). In terms of biological role, S-adenosyl-L-methionine-dependent protein-arginine N-methyltransferase that catalyzes both the mono- and asymmetric (type I) dimethylation of the guanidino nitrogens of arginine residues in a variety of RNA-binding proteins such as heterogeneous nuclear ribonucleoproteins (hnRNPs) and small nuclear ribonucleoproteins (snRNPs). Methylates NAB2, NPL3, HRP1 and YRA1, shuttling hnRNPs involved in mRNA processing and export, facilitating their export out of the nucleus. Methylation of NPL3 weakens its interaction with THO2, a component of the TREX (transcription/export) complex important for transcriptional elongation and recruitment of mRNA export factors. Methylates the hnRNP HRB1, but does not influence its subcellular location. Methylates the nucleolar proteins GAR1, NOP1 and NSR1. Methylates the snRNP SNP1 and modulates the cotranscriptional recruitment of splicing factors. Dimethylates free histone H4 (HHF1/HHF2) at 'Arg-4' (H4R3me2a) and plays a role in preservation and establishment of silent chromatin domains. Mono- and dimethylates ribosomal protein S2 (RPS2) at 'Arg-11'. Methylates the catalytic subunit of the SWI/SNF chromatin-remodeling complex SNF2. The chain is Protein arginine N-methyltransferase 1 from Saccharomyces cerevisiae (strain ATCC 204508 / S288c) (Baker's yeast).